Here is a 257-residue protein sequence, read N- to C-terminus: Putative hydro-lyase Bcen2424_3550 (257 aa).

It belongs to the D-glutamate cyclase family.

This is Putative hydro-lyase Bcen2424_3550 from Burkholderia cenocepacia (strain HI2424).